A 176-amino-acid polypeptide reads, in one-letter code: Ribosome maturation factor RimM (176 aa).

One can recognise a PRC barrel domain in the interval 97–176 (EDEFYWRDLI…QILVDWDPDF (80 aa)).

This sequence belongs to the RimM family. Binds ribosomal protein uS19.

Its subcellular location is the cytoplasm. An accessory protein needed during the final step in the assembly of 30S ribosomal subunit, possibly for assembly of the head region. Essential for efficient processing of 16S rRNA. May be needed both before and after RbfA during the maturation of 16S rRNA. It has affinity for free ribosomal 30S subunits but not for 70S ribosomes. In Shewanella oneidensis (strain ATCC 700550 / JCM 31522 / CIP 106686 / LMG 19005 / NCIMB 14063 / MR-1), this protein is Ribosome maturation factor RimM.